A 165-amino-acid chain; its full sequence is MATVTSSAAVAIPSFAGLKASSTTRAATVKVAVATPRMSIKASLKDVGVVVAATAAAGILAGNAMAAEVLLGSSDGGLAFVPSDLSIASGEKITFKNNAGFPHNVVFDEDEVPAGVDVTKISMPEEDLLNAPGEEYSVTLTEKGTYKFYCAPHAGAGMVGKVTVN.

Residues Met-1–Ala-66 constitute a chloroplast transit peptide. Residues Ala-67–Asn-165 form the Plastocyanin-like domain. The Cu cation site is built by His-103, Cys-150, His-153, and Met-158.

The protein belongs to the plastocyanin family. Requires Cu(2+) as cofactor.

The protein resides in the plastid. The protein localises to the chloroplast thylakoid membrane. Its function is as follows. Participates in electron transfer between P700 and the cytochrome b6-f complex in photosystem I. The chain is Plastocyanin, chloroplastic (PETE) from Silene latifolia subsp. alba (White campion).